The primary structure comprises 175 residues: Gamma-crystallin M1 (175 aa).

Beta/gamma crystallin 'Greek key' domains are found at residues 2–40 (GKII…RVES), 41–86 (GCFM…RYPY), 89–121 (FRMR…RMSD), and 130–172 (GHWL…RRIT).

It belongs to the beta/gamma-crystallin family. In terms of assembly, monomer.

Crystallins are the dominant structural components of the vertebrate eye lens. This chain is Gamma-crystallin M1 (GM1), found in Chiloscyllium indicum (Slender bamboo shark).